The primary structure comprises 202 residues: Recombination protein RecR (202 aa).

The C4-type zinc finger occupies Cys-61–Cys-76. Residues Ser-84–Pro-179 form the Toprim domain.

It belongs to the RecR family.

Its function is as follows. May play a role in DNA repair. It seems to be involved in an RecBC-independent recombinational process of DNA repair. It may act with RecF and RecO. The sequence is that of Recombination protein RecR from Bordetella avium (strain 197N).